Here is a 436-residue protein sequence, read N- to C-terminus: Putative ankyrin repeat protein FPV026 (436 aa).

6 ANK repeats span residues 63–92 (EGIR…NVNE), 101–130 (TCYS…DVNN), 135–164 (LRNT…DQNI), 168–197 (NGNI…NLEI), 201–230 (NGRT…LVDS), and 234–266 (EGYT…FLNI). The 28-residue stretch at 409–436 (TSTITNLPYEVIYIIVEKMTNKELCEIR) folds into the F-box domain.

The sequence is that of Putative ankyrin repeat protein FPV026 from Fowlpox virus (strain NVSL) (FPV).